A 223-amino-acid chain; its full sequence is UPF0758 protein HD_0732 (223 aa).

An MPN domain is found at 98–220; the sequence is TINTPHLAIM…YFSFEEERFH (123 aa). Residues His-169, His-171, and Asp-182 each coordinate Zn(2+). Residues 169–182 carry the JAMM motif motif; sequence HNHPSGNCTASQAD.

The protein belongs to the UPF0758 family.

The protein is UPF0758 protein HD_0732 of Haemophilus ducreyi (strain 35000HP / ATCC 700724).